Reading from the N-terminus, the 288-residue chain is Pyridoxal kinase PdxY (288 aa).

Substrate-binding positions include S12 and 47 to 48 (TQ). ATP-binding positions include D114, E151, K184, and 211 to 214 (RPLL). Residue D225 coordinates substrate.

Belongs to the pyridoxine kinase family. PdxY subfamily. As to quaternary structure, homodimer. It depends on Mg(2+) as a cofactor.

It carries out the reaction pyridoxal + ATP = pyridoxal 5'-phosphate + ADP + H(+). It functions in the pathway cofactor metabolism; pyridoxal 5'-phosphate salvage; pyridoxal 5'-phosphate from pyridoxal: step 1/1. Pyridoxal kinase involved in the salvage pathway of pyridoxal 5'-phosphate (PLP). Catalyzes the phosphorylation of pyridoxal to PLP. In Pseudomonas savastanoi pv. phaseolicola (strain 1448A / Race 6) (Pseudomonas syringae pv. phaseolicola (strain 1448A / Race 6)), this protein is Pyridoxal kinase PdxY.